A 183-amino-acid chain; its full sequence is Hypoxanthine/guanine phosphoribosyltransferase (183 aa).

Belongs to the purine/pyrimidine phosphoribosyltransferase family. Archaeal HPRT subfamily. Homodimer.

The protein resides in the cytoplasm. It catalyses the reaction IMP + diphosphate = hypoxanthine + 5-phospho-alpha-D-ribose 1-diphosphate. The enzyme catalyses GMP + diphosphate = guanine + 5-phospho-alpha-D-ribose 1-diphosphate. It participates in purine metabolism; IMP biosynthesis via salvage pathway; IMP from hypoxanthine: step 1/1. In terms of biological role, catalyzes a salvage reaction resulting in the formation of IMP that is energically less costly than de novo synthesis. The polypeptide is Hypoxanthine/guanine phosphoribosyltransferase (Methanotorris igneus (strain DSM 5666 / JCM 11834 / Kol 5)).